Here is a 391-residue protein sequence, read N- to C-terminus: Glycerophosphocholine acyltransferase 1 (391 aa).

The Cytoplasmic segment spans residues 1-66 (MSNNEDPINE…IAKQAEEHES (66 aa)). The helical transmembrane segment at 67–87 (FINKVTHLLGVLGFGGFCFLL) threads the bilayer. At 88–92 (GARPQ) the chain is on the lumenal side. The helical transmembrane segment at 93 to 113 (DIPYVYCLFFFIFVPLRWIYY) threads the bilayer. At 114-119 (RFKKWH) the chain is on the cytoplasmic side. Residues 120-140 (YFLLDFCYYANTIFLVDLLLY) form a helical membrane-spanning segment. Residues 141-144 (PKDE) are Lumenal-facing. The helical transmembrane segment at 145–165 (KLFMVCFSFAEGPLAWALIVW) threads the bilayer. Over 166-172 (RCSLVFS) the chain is Cytoplasmic. A helical membrane pass occupies residues 173-193 (SVDKIVSVLIHLLPGLVFFTI). The Lumenal segment spans residues 194-226 (RWWNPATFEAMHPEGTSGRASWPYVEDKSFLFT). Residues 227 to 247 (WLFLVPLVAYFLWQLLYFLIV) form a helical membrane-spanning segment. The Cytoplasmic portion of the chain corresponds to 248–294 (NVLRRQRLLRDPEVMTSYRELSKKAQKANNVWWRLSGLLGDQNRMLM). A helical membrane pass occupies residues 295 to 315 (YILLQALFTVATTALTVPIFL). Residues 316-318 (SYE) lie on the Lumenal side of the membrane. A helical membrane pass occupies residues 319–339 (LHAVFQILKVSAAVWNGGSFL). The Cytoplasmic segment spans residues 340–391 (LDVMPRQVILKEKKKSELQPAHIQQYHSEPKQDQSPNSMEIRMKTIHSAEEQ). The interval 354–391 (KSELQPAHIQQYHSEPKQDQSPNSMEIRMKTIHSAEEQ) is disordered. Over residues 380–391 (IRMKTIHSAEEQ) the composition is skewed to basic and acidic residues.

Belongs to the GPC1 family.

It is found in the membrane. The enzyme catalyses sn-glycerol 3-phosphocholine + an acyl-CoA = a monoacyl-sn-glycero-3-phosphocholine + CoA. It carries out the reaction sn-glycero-3-phosphoethanolamine + an acyl-CoA = a monoacyl-sn-glycero-3-phosphoethanolamine + CoA. It catalyses the reaction sn-glycerol 3-phosphocholine + hexadecanoyl-CoA = hexadecanoyl-sn-glycero-3-phosphocholine + CoA. The catalysed reaction is (9Z)-hexadecenoyl-CoA + sn-glycerol 3-phosphocholine = (9Z-hexadecenoyl)-sn-glycero-3-phosphocholine + CoA. The enzyme catalyses (9Z,12Z)-octadecadienoyl-CoA + sn-glycerol 3-phosphocholine = (9Z,12Z-octadecadienoyl)-sn-glycero-3-phosphocholine + CoA. It carries out the reaction (12R)-hydroxy-(9Z)-octadecenoyl-CoA + sn-glycerol 3-phosphocholine = (12R-hydroxy-9Z-octadecenoyl)-sn-glycero-3-phosphocholine + CoA. It catalyses the reaction (9Z,12Z,15Z)-octadecatrienoyl-CoA + sn-glycerol 3-phosphocholine = (9Z,12Z,15Z-octadecatrienoyl)-sn-glycero-3-phosphocholine + CoA. The catalysed reaction is sn-glycerol 3-phosphocholine + (9Z)-octadecenoyl-CoA = (9Z-octadecenoyl)-sn-glycero-3-phosphocholine + CoA. In terms of biological role, glycerophosphocholine acyltransferase (GPCAT) that utilizes acyl-CoA to acylate glycero-3-phosphocholine (GPC), forming lysophosphatidylcholine (LPC). Shows broad acyl specificities with a preference for 16:0-CoA, polyunsaturated acyl-CoA, and the hydroxylated ricinoleoyl-CoA. Also catalyzes the acylation of glycero-3-phosphoethanolamine (GPE) with acyl-CoA. In addition to acyl-CoA, GPCAT efficiently utilizes LPC and lysophosphatidylethanolamine (LPE) as acyl donors in the acylation of GPC. Contributes to the maintenance of phosphatidylcholine (PC) homeostasis and might also have specific functions in acyl editing of PC, such as transferring acyl groups modified at the sn-2 position of PC to the sn-1. The chain is Glycerophosphocholine acyltransferase 1 from Ricinus communis (Castor bean).